We begin with the raw amino-acid sequence, 806 residues long: Leucine--tRNA ligase (806 aa).

The 'HIGH' region signature appears at 54 to 64; sequence SYPSGDLHMGH. The 'KMSKS' region motif lies at 571-575; that stretch reads KMSKS. K574 provides a ligand contact to ATP.

It belongs to the class-I aminoacyl-tRNA synthetase family.

It localises to the cytoplasm. The enzyme catalyses tRNA(Leu) + L-leucine + ATP = L-leucyl-tRNA(Leu) + AMP + diphosphate. The sequence is that of Leucine--tRNA ligase from Tropheryma whipplei (strain Twist) (Whipple's bacillus).